Reading from the N-terminus, the 265-residue chain is 4-hydroxy-tetrahydrodipicolinate reductase (265 aa).

NAD(+) is bound by residues 7-12 and D33; that span reads GASGRM. R34 is a binding site for NADP(+). Residues 96 to 98 and 120 to 123 each bind NAD(+); these read GTT and AANM. H153 functions as the Proton donor/acceptor in the catalytic mechanism. (S)-2,3,4,5-tetrahydrodipicolinate is bound at residue H154. K157 serves as the catalytic Proton donor. 163-164 serves as a coordination point for (S)-2,3,4,5-tetrahydrodipicolinate; that stretch reads GT.

This sequence belongs to the DapB family.

It is found in the cytoplasm. The enzyme catalyses (S)-2,3,4,5-tetrahydrodipicolinate + NAD(+) + H2O = (2S,4S)-4-hydroxy-2,3,4,5-tetrahydrodipicolinate + NADH + H(+). The catalysed reaction is (S)-2,3,4,5-tetrahydrodipicolinate + NADP(+) + H2O = (2S,4S)-4-hydroxy-2,3,4,5-tetrahydrodipicolinate + NADPH + H(+). It functions in the pathway amino-acid biosynthesis; L-lysine biosynthesis via DAP pathway; (S)-tetrahydrodipicolinate from L-aspartate: step 4/4. In terms of biological role, catalyzes the conversion of 4-hydroxy-tetrahydrodipicolinate (HTPA) to tetrahydrodipicolinate. This Burkholderia cenocepacia (strain ATCC BAA-245 / DSM 16553 / LMG 16656 / NCTC 13227 / J2315 / CF5610) (Burkholderia cepacia (strain J2315)) protein is 4-hydroxy-tetrahydrodipicolinate reductase.